A 37-amino-acid polypeptide reads, in one-letter code: Large ribosomal subunit protein bL36c (37 aa).

It belongs to the bacterial ribosomal protein bL36 family.

It is found in the plastid. Its subcellular location is the chloroplast. The protein is Large ribosomal subunit protein bL36c of Psilotum nudum (Whisk fern).